The following is a 146-amino-acid chain: Large ribosomal subunit protein uL15 (146 aa).

The tract at residues 1–51 (MKLHELQPAAGSRKVRNRVGRGTSSGNGKTAGRGQKGQKARSGGGVRLGFE) is disordered. Gly residues-rich tracts occupy residues 23 to 35 (TSSGNGKTAGRGQ) and 42 to 51 (SGGGVRLGFE).

Belongs to the universal ribosomal protein uL15 family. As to quaternary structure, part of the 50S ribosomal subunit.

Functionally, binds to the 23S rRNA. The chain is Large ribosomal subunit protein uL15 from Streptococcus gordonii (strain Challis / ATCC 35105 / BCRC 15272 / CH1 / DL1 / V288).